A 474-amino-acid polypeptide reads, in one-letter code: Transcription factor fscB (474 aa).

2 disordered regions span residues Val114–Thr153 and Gly207–Pro242. The segment covering Ser120–Ser131 has biased composition (low complexity). Over residues His132–Thr153 the composition is skewed to polar residues. Over residues Gly207 to Ala221 the composition is skewed to basic and acidic residues. Residues Gln222–Pro240 are compositionally biased toward polar residues.

Belongs to the POU transcription factor family. Class-3 subfamily.

It localises to the nucleus. Functionally, transcription factor; part of the fragmented gene cluster that mediates the biosynthesis of fusarochromene, a tryptophan-derived metabolite closely related to a group of mycotoxins including fusarochromanone. The chain is Transcription factor fscB from Fusarium equiseti (Fusarium scirpi).